The sequence spans 647 residues: Chaperone protein DnaK (647 aa).

The residue at position 198 (threonine 198) is a Phosphothreonine; by autocatalysis. 3 stretches are compositionally biased toward basic and acidic residues: residues 514-529 (AEANKEEDKKKRESVD), 540-557 (STEKNLKEHGAKVSDADK), and 600-622 (SQEKKEGSPKEGDKNDEGKKDDN). Disordered regions lie at residues 514-557 (AEAN…DADK) and 596-647 (AIYK…EKSA). Residues 623 to 632 (VVDADFEEVK) show a composition bias toward acidic residues. Residues 633–647 (EESKEGKEEDKEKSA) are compositionally biased toward basic and acidic residues.

It belongs to the heat shock protein 70 family.

Its function is as follows. Acts as a chaperone. This Pelagibacter ubique (strain HTCC1062) protein is Chaperone protein DnaK.